We begin with the raw amino-acid sequence, 184 residues long: Inactive cytochrome P450 monooxygenase lolP2 (184 aa).

Residues 10-30 (GIVWLTVAAIAISYILQSSFL) traverse the membrane as a helical segment. Positions 161–184 (RRTRGSRPRSRPRWMPARWSRSSP) are disordered. Positions 163–172 (TRGSRPRSRP) are enriched in basic residues. Over residues 173-184 (RWMPARWSRSSP) the composition is skewed to low complexity.

This sequence belongs to the cytochrome P450 family.

Its subcellular location is the membrane. Functionally, cytochrome P450 monooxygenase; part of the gene cluster that mediates the biosynthesis of loline alkaloids, potent insecticidal agents composed of a pyrrolizidine ring system and an uncommon ether bridge linking carbons 2 and 7. Lolines are structurally differentiated by the various modifications of the L-amino group and include norloline, loline, N-methylloline, N-acetylloline, N-acetylnorloline, and N-formylloline. The first committed step is the condensation of O-acetyl-L-homoserine (derived from L-aspartic acid) and L-proline, probably catalyzed by the gamma-type pyridoxal 5'-phosphate(PLP)-dependent enzyme lolC, to give the diamino diacid, NACPP. Ensuing cyclization, decarboxylation, and acetylation steps yield 1-exo-acetamidopyrrolizidine (AcAP). LolO is required for installation of the ether bridge upon the pathway intermediate, 1-exo-acetamidopyrrolizidine (AcAP). In sequential 2-oxoglutarate- and O(2)-consuming steps, lolO removes hydrogens from C2 and C7 of AcAP to form both carbon-oxygen bonds in N-acetylnorloline (NANL), the precursor to all other lolines. The enzymes lolD, lolE, lolF and lolT have also been proposed to be involved in the ether-bridge installation. Further processing of the exocyclic moiety of NANL by fungal N-acetamidase (LolN), methyltransferase (LolM), and cytochrome P450 (LolP) enzymes, with occasional involvement of a plant acetyltransferase, generates the other known lolines. LolN transforms NANL to norlonine which is monomethylated and dimethylated to respectively lonine and N-methyllonine (NML) by lolM. LolP catalyzes hydroxylation of the methyl group in N-methylloline (NML) and further oxygenation to N-formylloline (NFL). A plant acetyltransferase is responsible for the acetylation of loline to form N-acetylloline (NAL). LolA might interact with aspartate kinase to prevent feedback inhibition of its activity by these end products and thereby promote production of L-homoserine from L-aspartate. The sequence is that of Inactive cytochrome P450 monooxygenase lolP2 from Epichloe uncinata (Endophyte fungus).